The sequence spans 349 residues: Ribonucleoside-diphosphate reductase small chain (349 aa).

The Fe cation site is built by aspartate 99, glutamate 130, and histidine 133. The active site involves tyrosine 137. 3 residues coordinate Fe cation: glutamate 192, glutamate 226, and histidine 229.

The protein belongs to the ribonucleoside diphosphate reductase small chain family. As to quaternary structure, heterodimer of a large and a small subunit. The cofactor is Fe cation.

It carries out the reaction a 2'-deoxyribonucleoside 5'-diphosphate + [thioredoxin]-disulfide + H2O = a ribonucleoside 5'-diphosphate + [thioredoxin]-dithiol. In terms of biological role, provides the precursors necessary for DNA synthesis. Catalyzes the biosynthesis of deoxyribonucleotides from the corresponding ribonucleotides. The chain is Ribonucleoside-diphosphate reductase small chain (RNR2) from Plasmodium falciparum (isolate Dd2).